A 122-amino-acid chain; its full sequence is Large ribosomal subunit protein uL14 (122 aa).

The protein belongs to the universal ribosomal protein uL14 family. In terms of assembly, part of the 50S ribosomal subunit. Forms a cluster with proteins L3 and L19. In the 70S ribosome, L14 and L19 interact and together make contacts with the 16S rRNA in bridges B5 and B8.

Binds to 23S rRNA. Forms part of two intersubunit bridges in the 70S ribosome. This chain is Large ribosomal subunit protein uL14, found in Nocardia farcinica (strain IFM 10152).